Consider the following 453-residue polypeptide: Allantoinase (453 aa).

His59, His61, Lys146, His186, His242, and Asp315 together coordinate Zn(2+). Lys146 carries the N6-carboxylysine modification.

The protein belongs to the metallo-dependent hydrolases superfamily. Allantoinase family. Homotetramer. It depends on Zn(2+) as a cofactor. In terms of processing, carboxylation allows a single lysine to coordinate two zinc ions.

It catalyses the reaction (S)-allantoin + H2O = allantoate + H(+). Its pathway is nitrogen metabolism; (S)-allantoin degradation; allantoate from (S)-allantoin: step 1/1. Its function is as follows. Catalyzes the conversion of allantoin (5-ureidohydantoin) to allantoic acid by hydrolytic cleavage of the five-member hydantoin ring. The chain is Allantoinase from Escherichia coli (strain K12 / MC4100 / BW2952).